The sequence spans 202 residues: MKQVVVATKNMGKVREFAELFERFDLEVKSLHDFPHIEEVEETGETFEENAILKADSLSRQLNAIVIADDSGLIVDALNGKPGVYSARFAGEPKDDQANIDKVLQELNEVAFEKRKARFYCALAVAFPEGDKKPVIVNGTCEGFILEQRRGENGFGYDPIFYVEEYKKAMAELSSDEKNAISHRGRALRKLEEKIPEWFLGE.

8–13 (TKNMGK) contributes to the substrate binding site. Positions 41 and 70 each coordinate Mg(2+). Asp-70 acts as the Proton acceptor in catalysis. Residues Ser-71, 155–158 (FGYD), Lys-178, and 183–184 (HR) each bind substrate.

Belongs to the HAM1 NTPase family. Homodimer. It depends on Mg(2+) as a cofactor.

The catalysed reaction is XTP + H2O = XMP + diphosphate + H(+). It carries out the reaction dITP + H2O = dIMP + diphosphate + H(+). The enzyme catalyses ITP + H2O = IMP + diphosphate + H(+). Pyrophosphatase that catalyzes the hydrolysis of nucleoside triphosphates to their monophosphate derivatives, with a high preference for the non-canonical purine nucleotides XTP (xanthosine triphosphate), dITP (deoxyinosine triphosphate) and ITP. Seems to function as a house-cleaning enzyme that removes non-canonical purine nucleotides from the nucleotide pool, thus preventing their incorporation into DNA/RNA and avoiding chromosomal lesions. In Bacillus anthracis, this protein is dITP/XTP pyrophosphatase.